Here is a 467-residue protein sequence, read N- to C-terminus: Inactive pancreatic lipase-related protein 1 (467 aa).

The signal sequence occupies residues 1–17 (MVSIWTIALFLLGAAKA). Disulfide bonds link Cys21–Cys27 and Cys109–Cys120. N-linked (GlcNAc...) asparagine glycosylation is present at Asn157. Ser171 (nucleophile) is an active-site residue. The Charge relay system role is filled by Asp194. Residues Glu205, Arg208, Asp210, and Asp213 each coordinate Ca(2+). A disulfide bond links Cys255 and Cys279. Catalysis depends on His281, which acts as the Charge relay system. 3 cysteine pairs are disulfide-bonded: Cys303-Cys314, Cys317-Cys322, and Cys451-Cys467. The PLAT domain maps to 356-467 (WRYGVSITLS…EDVLLTLTPC (112 aa)).

It belongs to the AB hydrolase superfamily. Lipase family. As to expression, detected in pancreas (at protein level).

It localises to the secreted. Functionally, may function as inhibitor of dietary triglyceride digestion. Lacks detectable lipase activity towards triglycerides, diglycerides, phosphatidylcholine, galactolipids or cholesterol esters (in vitro). This is Inactive pancreatic lipase-related protein 1 (PNLIPRP1) from Canis lupus familiaris (Dog).